The primary structure comprises 262 residues: Phosphonates import ATP-binding protein PhnC (262 aa).

The ABC transporter domain maps to 5–253 (IRVEKLAKTF…RFDHLYRSIN (249 aa)). 37–44 (GPSGSGKS) serves as a coordination point for ATP.

The protein belongs to the ABC transporter superfamily. Phosphonates importer (TC 3.A.1.9.1) family. The complex is composed of two ATP-binding proteins (PhnC), two transmembrane proteins (PhnE) and a solute-binding protein (PhnD).

Its subcellular location is the cell inner membrane. The catalysed reaction is phosphonate(out) + ATP + H2O = phosphonate(in) + ADP + phosphate + H(+). Part of the ABC transporter complex PhnCDE involved in phosphonates import. Responsible for energy coupling to the transport system. The chain is Phosphonates import ATP-binding protein PhnC from Shigella sonnei (strain Ss046).